Reading from the N-terminus, the 62-residue chain is MAKKLAITLTRSVIGRPEDQRITVKTLGLRKMHQTVVHNDNPAIRGMINKVAHLVTVKEIEE.

Belongs to the universal ribosomal protein uL30 family. In terms of assembly, part of the 50S ribosomal subunit.

In Geobacillus thermodenitrificans (strain NG80-2), this protein is Large ribosomal subunit protein uL30.